The primary structure comprises 557 residues: Tripeptidyl-peptidase 1 (557 aa).

The signal sequence occupies residues Met-1–Gly-16. A propeptide spans Glu-17–Gly-190 (removed in mature form). Asn-53 carries N-linked (GlcNAc...) asparagine glycosylation. Cys-107 and Cys-118 form a disulfide bridge. Residues Gly-194–Asp-557 form the Peptidase S53 domain. 2 N-linked (GlcNAc...) asparagine glycosylation sites follow: Asn-205 and Asn-216. Active-site charge relay system residues include Glu-266 and Asp-270. 3 N-linked (GlcNAc...) asparagine glycosylation sites follow: Asn-280, Asn-307, and Asn-438. Cystine bridges form between Cys-359/Cys-521 and Cys-517/Cys-532. The active-site Charge relay system is the Ser-470. Positions 512 and 513 each coordinate Ca(2+). Residue Asp-538 participates in Ca(2+) binding.

The cofactor is Ca(2+). Activated by autocatalytic proteolytical processing.

Its subcellular location is the lysosome. It catalyses the reaction Release of an N-terminal tripeptide from a polypeptide, but also has endopeptidase activity.. Functionally, lysosomal serine protease with tripeptidyl-peptidase I activity. May act as a non-specific lysosomal peptidase which generates tripeptides from the breakdown products produced by lysosomal proteinases. Requires substrates with an unsubstituted N-terminus. The sequence is that of Tripeptidyl-peptidase 1 from Danio rerio (Zebrafish).